Consider the following 170-residue polypeptide: Transcription factor E (170 aa).

In terms of domain architecture, HTH TFE/IIEalpha-type spans 1–93; that stretch reads MKDAYLYVVE…AWYVDDEIIR (93 aa).

This sequence belongs to the TFE family. As to quaternary structure, monomer. Interaction with RNA polymerase subunits RpoF and RpoE is necessary for Tfe stimulatory transcription activity. Able to interact with Tbp and RNA polymerase in the absence of DNA promoter. Interacts both with the preinitiation and elongation complexes.

In terms of biological role, transcription factor that plays a role in the activation of archaeal genes transcribed by RNA polymerase. Facilitates transcription initiation by enhancing TATA-box recognition by TATA-box-binding protein (Tbp), and transcription factor B (Tfb) and RNA polymerase recruitment. Not absolutely required for transcription in vitro, but particularly important in cases where Tbp or Tfb function is not optimal. It dynamically alters the nucleic acid-binding properties of RNA polymerases by stabilizing the initiation complex and destabilizing elongation complexes. Seems to translocate with the RNA polymerase following initiation and acts by binding to the non template strand of the transcription bubble in elongation complexes. This Pyrobaculum arsenaticum (strain DSM 13514 / JCM 11321 / PZ6) protein is Transcription factor E.